Reading from the N-terminus, the 245-residue chain is tRNA pseudouridine synthase A (245 aa).

Aspartate 52 serves as the catalytic Nucleophile. Substrate is bound at residue tyrosine 111.

Belongs to the tRNA pseudouridine synthase TruA family. Homodimer.

It catalyses the reaction uridine(38/39/40) in tRNA = pseudouridine(38/39/40) in tRNA. Its function is as follows. Formation of pseudouridine at positions 38, 39 and 40 in the anticodon stem and loop of transfer RNAs. This is tRNA pseudouridine synthase A from Nitrobacter hamburgensis (strain DSM 10229 / NCIMB 13809 / X14).